The chain runs to 3371 residues: PNEEAAAVWLSHGPAAERGFTIWPSAFVLQPKEKIVVSITWTPLKGGRIRETITFLVNDILKHQAILLGNAEEPKKKKRTLWDTINKKKASASSRHNKKASNIQNVNKTFNVSPKADRVRSPLQACENLATNGNCSPPESNPLILEENKLPISPISPASQECHRGTCLPLPVRRSTTYTSLPASENGGLVKADGANTAEDFHFNEKGITETSFDSIDNVNSQIEENGKLTLTPNYSSSLNITQSQGHFLSPDSFVNNSHASNNEPEFVKCLSPDMFVKGNTRPVILESKRVHEICRKILSPDSFINDNYGLNEDLETESINPILSPNQFLKDNMAYICVSQQTCQLPLSTGHFQDSQPPQDERKNAAVPCISECQQLESPKATFEASKALEVMSNSYTFKKQNQPKFSAVQDISSHSRKKPIKRRPILSATVTKRKPTCAVENQMETVKPKAKRCLNVVVGDCXKETDDQKEKDDFHPFLPIRDLIXXRPKSSKNIVTPPCKVASVARKRKSEGHTGDENVRITVTECXEXQEVKRPHFSPVESKTSTVKHTKKVVTSSLKRVSHREKLNLKKKTDSLGYRTPKTNRRTRPFVPVAQSNLTFIKPLKGIPRHPMPFAAKNMFYDERWKEKQEQGFTWWLNFILTPDDFTVKTNISEVNASTLLLGVESQHKVSVPKAPTKDEVSLRAYTARCRLNRLRRAACRLFTSEKMVKAMKKLEIEIEARRLIVRKDRHLWKDVGERQKVLNWLLSYNPLWLRIGLETIYGELVPLEDNSDVTGLAMFILNRLLWNPDIAAEYRHPSVPHLYRDGHEEALSKFTLKKLLLLICFLDYAKISRLIDHDPCLFCKDAEFKASKEILLAFSRDFLGGEGDLSRHLSLLGFPVTHVQMPFDEFDFAVKNLAVDLQCGVRLVRTMELLTQNWNLSKKLRIPAISRLQKMHNVDIVLEILKSRGIQLNDEHGNAILSKDIVDRHREKTLALLWKIALAFQVDISLNLDQLKEEIDFLKNTQSMKKTMSALSCRPDAVISKKRDERHSGPFEQCSESVKLLMDWVNAVCGFYNKKVENFTVSFSDGRVLCYLIHHYHPCYVPFDAICQRTTQTVECTHTGSVVLNSSSESDGSFLDFSLKPPDQENTSELYKELLENEKKNFQLVRSAARDLGGIPAMIHHSDMSNTIPDEKVVITYLSFLCARLLDLRKETRAARLIQTTWRQYKLKKDLKHHQERDKAARIIQSAIINFLTKQRFKKKVSAALVIQKYWRRALAKRKLLMLKKEKLERVHSKSASIIQRHWRRYSTRKQFLKLKYYSIFLQSKIRMIIAVASYKRYHWATVTIQRRWRAHVRSKQDRQRYELLRSSTLVIQFAFRRWRRRKRQSQINAAITLQRAFRQWRVQKCAQEERAAVVIQSWYRMHRELRKYIHLRSCVIIIQARFRCFQAQKLYTRTRESILTLQKHYRAYVKGKVERTGYLQKRAAAIRLQAAFRGRRARNLCRQIKAACVLQSYWRMRQDRLRFLNLKKNIIRLQAHIRRRQQLHTYQKMKKAALIIQIHFRAYMSAKEVLASYQKTRSAVIVLQSACRRMQARKKFLHILTSIVKIQSYYRAYASRRKFLRLKKATVKLQSIVRMKLARKQYLHLRAIAQQREEHRRASCIKLQAFLRGYLVRKQVRLQRKAAVSLQSYFRMRKMRLDYLKVCHAAVVIQRYYRAHRAGAQQRKHFLQVRRAVTYLQATYRGYKVRRQLQQQSAAALKIQAAFRGYRQRTKYQSVLQSALKIQRWYRTHKTVSAIRSHFFKTRTAAISLQSAYRGWKVRKQMRKEHEAAVKIQSAFRTARAQKEFRVLKTAASVIQQHLRARAAGRRQRTEYTALRRAAVMLQSAWRGRAARRRIQKQQRCAIIIQAYYRRHVQQKRWEIMKKAAHLIQMHYRAYRTGRKQHHLFLKTKXAAIILQSAFRGVRVRKKVKEMHQAAATIQSRYRAYQARKKYASYRAAAVIIQRWYRAAKLAGRQREEYLAVKKAALKIQAVYRGVRARRHIRRMHMAATLIKAAFKMQQSRRRYQQMRTAAIIIQVRYRAYCQGRAQRAKYLMILKAVALLQAALRGARVRQSLRRMRTAATLIQAHYRGRRQQAYFNKLKKVTKTVQQKYRAARERHAQLRRYNQLRRSAICIQAAFRGMRARRRLKAMHSAAAVIQRRFRTLGMRRRFLSLRKTAVWVQRKYRAKVCTRHHVQQLRLQKAAIKIQSWYRGWMVRKKIQEMRRAATVLQAAFRRHRTRARYQAWRCASQVIQQRFRAGRAARLQRRQYLQQRHSALVLQAAFRGMRVRRRLKRMHASATLIQSRFRSIMMRKRFLSLKKAAVFVQRKYRATICAKHHLHQFLELQKAIIIIQASYQRRMVKKQLQEMHRAAALIQASFRMHRARLAFQTWKHAAVLIQQRYRACRAAKLQRALYIRWRHSAVVIQAAYKGLKARQLLREKHRAAVIIQSTYRMYRQHFFYQKLQWATKVIQERYRASKRKALQHDALKAATCARAGFQDMVVRRLIEERRHQAAITIQEHFRAFKTRKHYLHFRAKVVFVQRRYRELMAVRTQAVICIQSCFRGFKARRGIQRMHLAATRIQSCYRRHRARADYQAKKRAVVVIQNHYRSYIRVKMERKEFLAIQKSARTIQAAFRGMKVRQKLKTMPDKKMAAPATQPAFYCHRTESQHEAGESPALVAQGLYKTSLVGPSQETEQHSQRKAAVTIQKAFRKMVTRRLEKQRRAAVRIQSFLQMAVYRRRFLQQKRAALTLQRCFRTQQSRKQFLLYREAAVGLQNPHRTSLPAKHQRELYLQIRSSVIIIQARVKGFIQKRKFRELKDSTIKIQAVWRRHKARKYLREVKAACRIQAWYRCWKARREYLAVLRAVRIIQRCFCXQQQRRRFLNVRASAVIIQRRWRTVLSGRTTHEQSLMTKRHQAACLIQANFRGYKARQAFLQQKSAALTIQRYIRARKAGKHQRMKYVELKKSTVVLQALVRGWLVRKRISEQRAKIRLLHFAAAAFYHLSALRIQRAYRRHVALKHANNKQLNSAICIQRWFRARSQRKRFLQKYSIINIQREAREQARQHSRAASVIQRAVRRFLLRKKQENFNKRIAKIQALWRGYSWRKKNDSTKTKAIRQRLQCVNREIREESKLYHRTAVALHHLLTYKYLSTVLEALKHLEAVTRLSSICCEKMAQSGAISKIFVLIRSCNRSVPCMEVIRYAMQVLLNVAKYEKTTSAIYDVENCVDTLLELMQMYQEKSGDKVADKSRSIFTKTCCLLAVLLKTTTRALDVQSRSKVVDRIYSLYKLTAHKHKVNTERILCKQKKNSSVSLSFFPETPVRTTMVSRLKPDWVLRRDNV.

Ser212, Ser215, Ser300, Ser325, and Ser540 each carry phosphoserine. Residues 536–559 form a disordered region; it reads RPHFSPVESKTSTVKHTKKVVTSS. One can recognise a Calponin-homology (CH) 1 domain in the interval 852–988; the sequence is KASKEILLAF…LLWKIALAFQ (137 aa). Residues 989-1014 are a coiled coil; sequence VDISLNLDQLKEEIDFLKNTQSMKKT. Ser1035 carries the phosphoserine modification. Positions 1042-1193 constitute a Calponin-homology (CH) 2 domain; it reads SESVKLLMDW…YLSFLCARLL (152 aa). IQ domains lie at 1198–1227, 1396–1427, 1469–1500, 1564–1593, 1587–1616, 1610–1639, 1644–1673, 1667–1698, 1717–1746, 1740–1769, 1790–1819, 1813–1844, 1863–1894, 1886–1917, 1936–1965, 1959–1990, 2009–2040, 2032–2063, 2082–2113, 2105–2134, 2155–2186, 2227–2258, 2250–2281, 2300–2331, 2323–2354, 2396–2427, 2446–2477, 2539–2570, 2580–2609, 2603–2634, 2653–2682, 2729–2760, 2751–2780, 2824–2853, 2847–2878, 2869–2900, 2944–2973, 2994–3025, 3096–3125, and 3119–3150; these read ETRA…RDKA, EERA…IIIQ, KRAA…VLQS, TRSA…SIVK, ILTS…ATVK, LKKA…IAQQ, RRAS…AAVS, QRKA…VVIQ, VRRA…AALK, QSAA…SALK, TRTA…AAVK, EHEA…SVIQ, LRRA…IIIQ, QQRC…HLIQ, TKXA…AAAT, MHQA…VIIQ, VKKA…TLIK, MHMA…IIIQ, ILKA…TLIQ, MRTA…VTKT, LRRS…AVIQ, LQKA…TVLQ, MRRA…QVIQ, QRHS…TLIQ, MHAS…VFVQ, MHRA…VLIQ, WRHS…VIIQ, RHQA…VFVQ, RTQA…AATR, MHLA…VVIQ, IQKS…KKMA, QRKA…RIQS, QRRA…AALT, IRSS…STIK, LKDS…RIQA, EVKA…RIIQ, RHQA…AALT, LKKS…RLLH, HSRA…RIAK, and FNKR…IRQR.

It localises to the cytoplasm. The protein localises to the cytoskeleton. The protein resides in the spindle. Its subcellular location is the nucleus. Functionally, probable role in mitotic spindle regulation and coordination of mitotic processes. May have a preferential role in regulating neurogenesis. The protein is Abnormal spindle-like microcephaly-associated protein homolog (ASPM) of Bos taurus (Bovine).